The following is a 182-amino-acid chain: Adenine phosphoribosyltransferase (182 aa).

It belongs to the purine/pyrimidine phosphoribosyltransferase family. As to quaternary structure, homodimer.

Its subcellular location is the cytoplasm. The enzyme catalyses AMP + diphosphate = 5-phospho-alpha-D-ribose 1-diphosphate + adenine. It participates in purine metabolism; AMP biosynthesis via salvage pathway; AMP from adenine: step 1/1. Functionally, catalyzes a salvage reaction resulting in the formation of AMP, that is energically less costly than de novo synthesis. This is Adenine phosphoribosyltransferase from Pseudomonas putida (strain GB-1).